The following is a 290-amino-acid chain: Enoyl-CoA hydratase, mitochondrial (290 aa).

The N-terminal 27 residues, 1 to 27, are a transit peptide targeting the mitochondrion; it reads MAALRVLLSCVRGPLRPPVRCPAWRPF. T46 is modified (phosphothreonine). Residue 98 to 101 participates in substrate binding; it reads ADIK. K101 carries the post-translational modification N6-acetyllysine; alternate. The residue at position 101 (K101) is an N6-succinyllysine; alternate. The residue at position 114 (S114) is a Phosphoserine. K115 is modified (N6-acetyllysine; alternate). K115 is modified (N6-succinyllysine; alternate). K118 carries the N6-acetyllysine modification. Position 141 (G141) interacts with substrate. K204 carries the post-translational modification N6-succinyllysine. Position 211 is an N6-acetyllysine (K211).

It belongs to the enoyl-CoA hydratase/isomerase family. Homohexamer; dimer of trimers. As to expression, liver, fibroblast, muscle. Barely detectable in spleen and kidney.

It is found in the mitochondrion matrix. The enzyme catalyses a (3S)-3-hydroxyacyl-CoA = a (2E)-enoyl-CoA + H2O. The catalysed reaction is a (3E)-enoyl-CoA = a 4-saturated (2E)-enoyl-CoA. It catalyses the reaction (3E)-hexenoyl-CoA = (2E)-hexenoyl-CoA. It carries out the reaction (3S)-3-hydroxybutanoyl-CoA = (2E)-butenoyl-CoA + H2O. The enzyme catalyses 3-hydroxyisovaleryl-CoA = 3-methylbut-2-enoyl-CoA + H2O. The catalysed reaction is 3-hydroxypropanoyl-CoA = acryloyl-CoA + H2O. It catalyses the reaction 3-hydroxybutanoyl-CoA = (2E)-butenoyl-CoA + H2O. It carries out the reaction 2-methylpropenoyl-CoA + H2O = (S)-3-hydroxyisobutanoyl-CoA. The enzyme catalyses (3S)-hydroxyhexanoyl-CoA = (2E)-hexenoyl-CoA + H2O. The catalysed reaction is (3S)-hydroxydecanoyl-CoA = (2E)-decenoyl-CoA + H2O. Its pathway is lipid metabolism; fatty acid beta-oxidation. Functionally, converts unsaturated trans-2-enoyl-CoA species ((2E)-enoyl-CoA) to the corresponding (3S)-3hydroxyacyl-CoA species through addition of a water molecule to the double bond. Catalyzes the hydration of medium- and short-chained fatty enoyl-CoA thioesters from 4 carbons long (C4) up to C16. Has high substrate specificity for crotonyl-CoA ((2E)-butenoyl-CoA) and moderate specificity for acryloyl-CoA, 3-methylcrotonyl-CoA (3-methyl-(2E)-butenoyl-CoA) and methacrylyl-CoA ((2E)-2-methylpropenoyl-CoA). Can bind tiglyl-CoA (2-methylcrotonoyl-CoA), but hydrates only a small amount of this substrate. Plays a key role in the beta-oxidation spiral of short- and medium-chain fatty acid oxidation. At a lower rate than the hydratase reaction, catalyzes the isomerase reaction of trans-3-enoyl-CoA species (such as (3E)-hexenoyl-CoA) to trans-2-enoyl-CoA species (such as (2E)-hexenoyl-CoA), which are subsequently hydrated to 3(S)-3-hydroxyacyl-CoA species (such as (3S)-hydroxyhexanoyl-CoA). The polypeptide is Enoyl-CoA hydratase, mitochondrial (Homo sapiens (Human)).